The chain runs to 879 residues: MLGKYKAVLALLLLIILVPLTLLMTLGLWVPTLAGIWLPLGTRIALDESPRITRKGLIIPDLRYLVGDCQLAHITNASLSHPSRWLLNVGTVELDSACLAKLPQTEQSPAAPKTLAQWQAMLPNTWINIDKLIFSPWQEWQGKLSLALTSDIQQLRYQGEKVKFQGQLKGQQLTVSELDVVAFENQPPVKLVGEFAMPLVPDGLPVSGHATATLNLPQEPSLVDAELDWQENSGQLIVLARDNGDPLLDLPWQITRQQLTVSDGRWSWPYAGFPLSGRLGVKVDNWQAGLENALVSGRLSVLTQGQAGKGNAVLNFGPGKLSMDNSQLPLQLTGEAKQADLILYARLPAQLSGSLSDPTLTFEPGALLRSKGRVIDSLDIDEIRWPLAGVKVTQRGVDGRLQAILQAHENELGDFVLHMDGLANDFLPDAGRWQWRYWGKGSFTPMNATWDVAGKGEWHDSTITLTDLSTGFDQLQYGTMTVEKPRLILDKPIVWVRDAQHPSFSGALSLDAGQTLFTGGSVLPPSTLKFSVDGRDPTYFLFKGDLHAGEIGPVRVNGRWDGIRLRGNAWWPKQSLTVFQPLVPPDWKMNLRDGELYAQVAFSAAPEQGFRAGGHGVLKGGSAWMPDNQVNGVDFVLPFRFADGAWHLGTRGPVTLRIAEVINLVTAKNITADLQGRYPWTEEEPLLLTDVSVDVLGGNVLMKQLRMPQHDPALLRLNNLSSSELVSAVNPKQFAMSGAFSGALPLWLNNEKWIVKDGWLANSGPMTLRLDKDTADAVVKDNMTAGSAINWLRYMEISRSSTKINLDNLGLLTMQANITGTSRVDGKSGTVNLNYHHEENIFTLWRSLRFGDNLQAWLEQNARLPGNDCPQGKECEEKQ.

At 1-6 the chain is on the cytoplasmic side; sequence MLGKYK. Residues 7 to 29 traverse the membrane as a helical segment; it reads AVLALLLLIILVPLTLLMTLGLW. At 30–879 the chain is on the periplasmic side; that stretch reads VPTLAGIWLP…PQGKECEEKQ (850 aa).

As to quaternary structure, interacts with the outer membrane lipoprotein YnbE.

Its subcellular location is the cell inner membrane. Its function is as follows. Involved in outer membrane lipid homeostasis. Interacts with the outer membrane lipoprotein YnbE to form a functional protein bridge connecting the inner and outer membranes of the cell. Likely transports phospholipids between the inner membrane and the outer membrane. It would provide a bridge-like structure that protects phospholipids as they travel across the periplasm. In terms of biological role, tamB, YdbH and YhdP are redundant, but not equivalent, in performing an essential function for growth and maintaining lipid homeostasis in the outer membrane. Any of these three proteins is sufficient for growth. This chain is Probable phospholipid transport protein YdbH (ydbH), found in Escherichia coli (strain K12).